A 97-amino-acid polypeptide reads, in one-letter code: Co-chaperonin GroES (97 aa).

It belongs to the GroES chaperonin family. As to quaternary structure, heptamer of 7 subunits arranged in a ring. Interacts with the chaperonin GroEL.

It localises to the cytoplasm. Functionally, together with the chaperonin GroEL, plays an essential role in assisting protein folding. The GroEL-GroES system forms a nano-cage that allows encapsulation of the non-native substrate proteins and provides a physical environment optimized to promote and accelerate protein folding. GroES binds to the apical surface of the GroEL ring, thereby capping the opening of the GroEL channel. The sequence is that of Co-chaperonin GroES from Aeromonas salmonicida (strain A449).